The following is a 395-amino-acid chain: E3 ubiquitin-protein ligase RNFT1 (395 aa).

Disordered stretches follow at residues 1 to 58 and 78 to 97; these read MQAS…SSRN and YSHS…GEHG. 6 consecutive transmembrane segments (helical) span residues 118–138, 165–185, 193–213, 216–236, 258–278, and 283–303; these read ILIL…LGIG, CAWL…TFHS, IFLN…IVGI, FILK…PSFI, IFVP…FGNV, and LGIL…FGHL. Residues 328–379 form a required for ubiquitin ligase activity and for protection against ER stress-induced cell death region; it reads CSDMDGICTICQAEFQKPVLLFCQHIFCEECITLWFNREKTCPLCRTVISEC. The segment at 335-373 adopts an RING-type zinc-finger fold; it reads CTICQAEFQKPVLLFCQHIFCEECITLWFNREKTCPLCR.

In terms of tissue distribution, predominantly expressed in testis.

It is found in the early endosome membrane. The enzyme catalyses S-ubiquitinyl-[E2 ubiquitin-conjugating enzyme]-L-cysteine + [acceptor protein]-L-lysine = [E2 ubiquitin-conjugating enzyme]-L-cysteine + N(6)-ubiquitinyl-[acceptor protein]-L-lysine.. It participates in protein modification; protein ubiquitination. Functionally, E3 ubiquitin-protein ligase that acts in the endoplasmic reticulum (ER)-associated degradation (ERAD) pathway, which targets misfolded proteins that accumulate in the endoplasmic reticulum (ER) for ubiquitination and subsequent proteasome-mediated degradation. Protects cells from ER stress-induced apoptosis. The protein is E3 ubiquitin-protein ligase RNFT1 (Rnft1) of Mus musculus (Mouse).